The following is a 388-amino-acid chain: Protein RecA (388 aa).

Residue 79-86 participates in ATP binding; it reads GPESSGKT. Residues 347 to 372 form a disordered region; sequence IDGEEVSEQDTENKKDEPKKEEAVNE. Positions 357-369 are enriched in basic and acidic residues; it reads TENKKDEPKKEEA.

Belongs to the RecA family.

Its subcellular location is the cytoplasm. Its function is as follows. Can catalyze the hydrolysis of ATP in the presence of single-stranded DNA, the ATP-dependent uptake of single-stranded DNA by duplex DNA, and the ATP-dependent hybridization of homologous single-stranded DNAs. It interacts with LexA causing its activation and leading to its autocatalytic cleavage. This chain is Protein RecA, found in Streptococcus pneumoniae (strain CGSP14).